The primary structure comprises 336 residues: Probable assembly chaperone of rpl4 (336 aa).

TPR repeat units follow at residues 39 to 72, 75 to 108, 110 to 143, and 162 to 195; these read GRAFELLGEVYAELADVKKARSAFKEAVSRSKNL, DQGYEKYLWLAQINDNGSKALKLYQKGVTILERL, IDKGEDADLKKKIQGAYCSIAELFMTDLCMQPDA, and AEALQTLASMRISQQKIEEAKDALSKCLQSISRA. A disordered region spans residues 316–336; it reads DEENEEAEWETSENEEEMDED.

This sequence belongs to the ACL4 family.

The protein resides in the cytoplasm. It localises to the nucleus. It is found in the nucleolus. Its function is as follows. Acts as a chaperone for the L4 ribosomal subunit encoded by rpl4A and rpl4B, required for hierarchical ribosome assembly. Shields ribosomal protein L4 until timely release and insertion into the pre-ribosome is possible, once ribosomal protein L18 is present. This is Probable assembly chaperone of rpl4 from Schizosaccharomyces pombe (strain 972 / ATCC 24843) (Fission yeast).